Reading from the N-terminus, the 486-residue chain is Cobyric acid synthase (486 aa).

Positions Val-248–Ala-435 constitute a GATase cobBQ-type domain. Catalysis depends on Cys-329, which acts as the Nucleophile. The active site involves His-427.

It belongs to the CobB/CobQ family. CobQ subfamily.

Its pathway is cofactor biosynthesis; adenosylcobalamin biosynthesis. Functionally, catalyzes amidations at positions B, D, E, and G on adenosylcobyrinic A,C-diamide. NH(2) groups are provided by glutamine, and one molecule of ATP is hydrogenolyzed for each amidation. This is Cobyric acid synthase from Pseudomonas syringae pv. tomato (strain ATCC BAA-871 / DC3000).